We begin with the raw amino-acid sequence, 126 residues long: Fluoride-specific ion channel FluC 2 (126 aa).

4 helical membrane passes run 7–27 (MWVG…GLSI), 37–57 (LGTF…SILF), 65–85 (YGDL…TTFS), and 101–121 (AIAA…AAFG). Positions 79 and 82 each coordinate Na(+).

Belongs to the fluoride channel Fluc/FEX (TC 1.A.43) family.

It is found in the cell inner membrane. The enzyme catalyses fluoride(in) = fluoride(out). Na(+) is not transported, but it plays an essential structural role and its presence is essential for fluoride channel function. In terms of biological role, fluoride-specific ion channel. Important for reducing fluoride concentration in the cell, thus reducing its toxicity. The sequence is that of Fluoride-specific ion channel FluC 2 from Yersinia pseudotuberculosis serotype I (strain IP32953).